A 486-amino-acid polypeptide reads, in one-letter code: MATFKDACYYYKRINKLNHTVLKLGVNDTWRPSPPTKYKGWCLDCCQHTDLTYCRGCTMYHVCQWCSQYGRCFLDNEPHLLRMRTFKNEVTKDDLMNLIDMYDTLFPMNQKIVDKFINNTRQHKCRNECMTQWYNHLLMPITLQSLSIELDGDIYYVFGYYDDMNNVNQTPFSFINLIDICDKLLLDDVNFTRMSFLPITLQQEYALRYFSKSRFISEQRKCVSDSHFSINVLENLHNPSFKIQITRNCSELSSDWNGACKLVKDTSAYFNILKTSHVEFYSVSTRCRMFTQRKLQIASKLMKPNYMTSNHRASATEVHNCKWCSTNSSYIVWNDFRVKKIYDNILNFLRALVKSNVNVGHCSSQEKIYECVENILDICDNEKWKTSVTEIFNCLEPVELNAVNYVLFNHEVNWDVINILVQSIGKVPQILTLNDVVTIMQSIIYEWFDIRYMRNTPMTTFTVDKLRRLCIEPKTVDYDSGISDVE.

An RNA-binding region spans residues 1–81; sequence MATFKDACYY…CFLDNEPHLL (81 aa). Positions 42–79 are zinc-binding domain; it reads CLDCCQHTDLTYCRGCTMYHVCQWCSQYGRCFLDNEPH. Residues 82–176 form an important for cytoskeleton localization region; that stretch reads RMRTFKNEVT…VNQTPFSFIN (95 aa). An interaction with host IRF3 region spans residues 317–486; sequence EVHNCKWCST…DYDSGISDVE (170 aa). The IKBKB-like degron (ILD) motif signature appears at 479–483; it reads DSGIS. The short motif at 480 to 483 is the pLxIS motif element; the sequence is SGIS.

The protein belongs to the rotavirus NSP1 family. Interacts (via C-terminus) with host IRF3; this interaction leads to IRF3 degradation. Interacts with host IRF7; this interaction leads to IRF7 degradation. Interacts with host CUL1 and CUL3. Interacts with host BTRC. Post-translationally, the C-terminal region is phosphorylated by host CKII/CSNK2A1. Phosphorylation of the DSGXS motif is essential for host NF-kappa-B inhibition.

The protein resides in the host cytoplasm. The protein localises to the host cytoskeleton. Plays a role in the inhibition of host innate immunity by inducing the degradation of key host factors required to activate interferon production such as IRF3, IRF5 or IRF7. Associates with components of cullin RING ligases (CRLs) including CUL1 or CUL3, which are essential multisubunit ubiquitination complexes, to modulate their activities. Recognizes the host NF-kappa-B regulator BTRC through the presence of a DSGXS motif in the C-terminal substrate recognition domain. The polypeptide is Non-structural protein 1 (Homo sapiens (Human)).